Consider the following 194-residue polypeptide: FK506-binding protein 3 (194 aa).

The first 19 residues, 1–19 (MNKFLIALLVLATLAVSFS), serve as a signal peptide directing secretion. Residues 44–133 (GDYISLKYVG…YFDLEVVSIE (90 aa)) enclose the PPIase FKBP-type domain. Residues 148–168 (VGTIIAFSMLAGFIVLVKFII) form a helical membrane-spanning segment. The disordered stretch occupies residues 173 to 194 (DESNSKKPAPGKPKKTKAAKQN). The segment covering 184 to 194 (KPKKTKAAKQN) has biased composition (basic residues).

This sequence belongs to the FKBP-type PPIase family.

It localises to the membrane. The enzyme catalyses [protein]-peptidylproline (omega=180) = [protein]-peptidylproline (omega=0). Its activity is regulated as follows. Inhibited by both FK506 and rapamycin. Functionally, PPIases accelerate the folding of proteins by catalyzing the cis-trans isomerization of proline imidic peptide bonds in oligopeptides. The chain is FK506-binding protein 3 (fkbp3) from Dictyostelium discoideum (Social amoeba).